Consider the following 134-residue polypeptide: MRHYEIVFLVHPDQSEQVPQMIERYRGMIESDGGHFHRLEDWGRRQLAYPIKKAHKAHYVLMNIECSSVALAELEDAFRFNDAVLRHLILARDEAVTSPSFLARDETDRRERSEETAEGEGEPDHSANEAVVTA.

A disordered region spans residues 100-134; it reads SFLARDETDRRERSEETAEGEGEPDHSANEAVVTA. Residues 103–115 are compositionally biased toward basic and acidic residues; sequence ARDETDRRERSEE.

This sequence belongs to the bacterial ribosomal protein bS6 family.

In terms of biological role, binds together with bS18 to 16S ribosomal RNA. The sequence is that of Small ribosomal subunit protein bS6 from Acidithiobacillus ferrooxidans (strain ATCC 23270 / DSM 14882 / CIP 104768 / NCIMB 8455) (Ferrobacillus ferrooxidans (strain ATCC 23270)).